The chain runs to 464 residues: Centrosomal protein of 55 kDa (464 aa).

Over residues 1–11 the composition is skewed to basic and acidic residues; it reads MSSRSTKDLIK. The interval 1 to 26 is disordered; it reads MSSRSTKDLIKSKWGSKPSNSKSETT. Coiled-coil stretches lie at residues 22 to 186, 238 to 337, and 374 to 403; these read KSET…QWLV, NDLL…FLYT, and QHQL…LHEF. S96 bears the Phosphoserine mark. An interaction with TSG101 region spans residues 157–236; the sequence is PNCFNSSINN…GYLQEEKQKC (80 aa). An interaction with PDCD6IP region spans residues 160 to 214; it reads FNSSINNIHEMEIQLKDALEKNQQWLVYDQQREVYVKGLLAKIFELEKKTETAAH. A required for localization to the interphase centrosome and to the midbody during cytokinesis region spans residues 355–464; it reads QMQACTLDFE…LLVHVEYCSK (110 aa). A phosphoserine; by CDK1 and MAPK1 mark is found at S425 and S428. T430 bears the Phosphothreonine mark. S436 carries the phosphoserine; by PLK1 modification.

As to quaternary structure, homodimer. Interacts (phosphorylated on Ser-425 and Ser-428) with PLK1; the interaction is indirect via the MTMR3:MTMR4 heterooligomer, occurs during early mitosis, regulates the phosphorylation of CEP55 by PLK1 and its recruitment to the midbody where it can mediate cell abscission. Interacts with AKAP9/CG-NAP; the interaction occurs in interphase and is lost upon mitotic entry. Interacts with PCNT/Kendrin; the interaction occurs in interphase and is lost upon mitotic entry. Directly interacts with PDCD6IP; this interaction is required for PDCD6IP targeting to the midbody; CEP55 binds PDCD6IP in a 2:1 stoichiometry; PDCD6IP competes with TSG101 for the same binding site. Interacts with TSG101; TSG101 competes with PDCD6IP for the same binding site; interaction is required for cytokinesis but not for viral budding. Interacts with MVB12A, VPS37B, VPS37C and VPS28. In terms of processing, there is a hierachy of phosphorylation, where both Ser-425 and Ser-428 are phosphorylated at the onset of mitosis, prior to Ser-436. Phosphorylation at Ser-425 and Ser-428 is required for dissociation from the centrosome at the G2/M boundary. Phosphorylation at the 3 sites, Ser-425, Ser-428 and Ser-436, is required for protein function at the final stages of cell division to complete cytokinesis successfully. Expressed in embryonic brain. Expressed in fetal brain ganglionic eminence, kidney tubules and multinucleate neurons in the temporal cortex. Expressed in adult brain, cerebellum, kidney tubules, intestine and muscles (at protein level). Widely expressed, mostly in proliferative tissues. Highly expressed in testis. Intermediate levels in adult and fetal thymus, as well as in various cancer cell lines. Low levels in different parts of the digestive tract, bone marrow, lymph nodes, placenta, fetal heart and fetal spleen. Hardly detected in brain.

It localises to the cytoplasm. Its subcellular location is the cytoskeleton. The protein resides in the microtubule organizing center. The protein localises to the centrosome. It is found in the centriole. It localises to the cleavage furrow. Its subcellular location is the midbody. The protein resides in the midbody ring. In terms of biological role, plays a role in mitotic exit and cytokinesis. Recruits PDCD6IP and TSG101 to midbody during cytokinesis. Required for successful completion of cytokinesis. Not required for microtubule nucleation. Plays a role in the development of the brain and kidney. This Homo sapiens (Human) protein is Centrosomal protein of 55 kDa.